A 132-amino-acid polypeptide reads, in one-letter code: MCMTDPVADMLTRIRNAGMAKHQKVDIPSSNLKVSLATVLRAEGFIKNFKVIADNKQGILRVYLKFIDEKEPVINEIKRISKPGGRVYVNSDKIKQVKNGLGVAILSTSKGLVTDKTAREMGIGGEVLCTVW.

The protein belongs to the universal ribosomal protein uS8 family. As to quaternary structure, part of the 30S ribosomal subunit. Contacts proteins S5 and S12.

Its function is as follows. One of the primary rRNA binding proteins, it binds directly to 16S rRNA central domain where it helps coordinate assembly of the platform of the 30S subunit. This chain is Small ribosomal subunit protein uS8, found in Geobacter sp. (strain M21).